The following is a 130-amino-acid chain: Snaclec B8 (130 aa).

3 disulfides stabilise this stretch: Cys2–Cys13, Cys30–Cys124, and Cys99–Cys116. Residues 9 to 125 (HEGHCYKVFK…CELAYHFICM (117 aa)) enclose the C-type lectin domain.

The protein belongs to the snaclec family. As to quaternary structure, heterodimer; disulfide-linked. As to expression, expressed by the venom gland.

The protein localises to the secreted. Interferes with one step of hemostasis (modulation of platelet aggregation, or coagulation cascade, for example). The polypeptide is Snaclec B8 (Macrovipera lebetinus (Levantine viper)).